Here is a 348-residue protein sequence, read N- to C-terminus: Phenylalanine--tRNA ligase alpha subunit (348 aa).

Glu259 lines the Mg(2+) pocket.

The protein belongs to the class-II aminoacyl-tRNA synthetase family. Phe-tRNA synthetase alpha subunit type 1 subfamily. Tetramer of two alpha and two beta subunits. Mg(2+) is required as a cofactor.

The protein resides in the cytoplasm. It carries out the reaction tRNA(Phe) + L-phenylalanine + ATP = L-phenylalanyl-tRNA(Phe) + AMP + diphosphate + H(+). The protein is Phenylalanine--tRNA ligase alpha subunit of Lacticaseibacillus casei (strain BL23) (Lactobacillus casei).